Here is a 564-residue protein sequence, read N- to C-terminus: Rhodopsin kinase GRK1 (564 aa).

Residues 1–15 form an interaction with RCVRN region; sequence MDFGSLETVVANSAF. The segment at 1–189 is N-terminal; it reads MDFGSLETVV…LEAQPIGEDW (189 aa). The residue at position 5 (Ser-5) is a Phosphoserine. Thr-8 carries the phosphothreonine modification. Position 21 is a phosphoserine; by PKA and autocatalysis (Ser-21). The RGS domain occupies 58-175; sequence FDNLCSEQPI…LGSLYFLRFL (118 aa). The Protein kinase domain occupies 190 to 455; it reads FLDFRVLGKG…CDALRANVLF (266 aa). ATP-binding positions include 196–204 and Lys-219; that span reads LGKGGFGEV. The Proton acceptor role is filled by Asp-317. Residues 456-521 enclose the AGC-kinase C-terminal domain; sequence KDISWRQLEA…GNCSIPWQEE (66 aa). The C-terminal stretch occupies residues 456–564; the sequence is KDISWRQLEA…TAKSGMCLIS (109 aa). Ser-491 carries the post-translational modification Phosphoserine; by autocatalysis. Thr-492 is modified (phosphothreonine; by autocatalysis). Cys-561 is modified (cysteine methyl ester). Cys-561 is lipidated: S-farnesyl cysteine. A propeptide spans 562–564 (removed in mature form); the sequence is LIS.

This sequence belongs to the protein kinase superfamily. AGC Ser/Thr protein kinase family. GPRK subfamily. As to quaternary structure, interacts (via N-terminus) with RCVRN (via C-terminus); the interaction is Ca(2+)-dependent. Interacts (when prenylated) with PDE6D; this promotes release from membranes. May form a complex composed of RHO, GRK1 and RCVRN in a Ca(2+)-dependent manner; RCVRN prevents the interaction between GRK1 and RHO. In terms of processing, autophosphorylated, Ser-21 is a minor site of autophosphorylation compared to Ser-491 and Thr-492. Phosphorylation at Ser-21 is regulated by light and activated by cAMP. Farnesylation is required for full activity. As to expression, detected in retina (at protein level). Retina-specific. Expressed in rod and cone photoreceptor cells.

The protein resides in the membrane. It is found in the cell projection. Its subcellular location is the cilium. It localises to the photoreceptor outer segment. It carries out the reaction L-threonyl-[rhodopsin] + ATP = O-phospho-L-threonyl-[rhodopsin] + ADP + H(+). The enzyme catalyses L-seryl-[rhodopsin] + ATP = O-phospho-L-seryl-[rhodopsin] + ADP + H(+). With respect to regulation, inhibited by RCVRN, which prevents the interaction between GRK1 and RHO. Inhibition is calcium-dependent. Functionally, retina-specific kinase involved in the signal turnoff via phosphorylation of rhodopsin (RHO), the G protein- coupled receptor that initiates the phototransduction cascade. This rapid desensitization is essential for scotopic vision and permits rapid adaptation to changes in illumination. May play a role in the maintenance of the outer nuclear layer in the retina. This is Rhodopsin kinase GRK1 from Rattus norvegicus (Rat).